A 439-amino-acid polypeptide reads, in one-letter code: MSTIKSVFAREILDSRGNPTVEVDLTTEKGLFRSAVPSGASTGIYEACELRDGDKSRYLGKGVLKAVENVNKILAPKLIGLDVTKQGEIDRLMLQIDGTENKTHLGANAILGCSMSVCRAAAAFRGLPLYRYIAELSGNKSPMLPLPCFNVINGGEHAGNKLAMQEFMICPTGATSFHEALRMAAETYHNLKLVIKKRYGMDATNVGDEGGFAPNIQANHEGLELIVEAIKQAGYTGKIEIGMDVAASSFWDAKESKYDLGFKVPADKKTPDMLVSGEGLIKLYEEWTSKYPIWSIEDPFDQDDWATYTRFTELIRNRIQIVGDDLLVTNPKRIVEARNKKACNALLLKLNQIGSVSEAVEACRLAREVNWGVMVSHRSGETEDAFIADLVVGLGCGQIKTGAPCRSERLAKYNQLLRIEEELGANAHYAAKTLSGVGH.

Residues His157 and Glu166 each coordinate substrate. Glu209 acts as the Proton donor in catalysis. The Mg(2+) site is built by Asp244, Glu297, and Asp324. Substrate-binding residues include Glu297 and Asp324. Catalysis depends on Lys349, which acts as the Proton acceptor. Residues 376–379 (SHRS) and Lys400 each bind substrate.

It belongs to the enolase family. As to quaternary structure, homodimer. It depends on Mg(2+) as a cofactor.

Its subcellular location is the cytoplasm. The enzyme catalyses (2R)-2-phosphoglycerate = phosphoenolpyruvate + H2O. It functions in the pathway carbohydrate degradation; glycolysis; pyruvate from D-glyceraldehyde 3-phosphate: step 4/5. This is Enolase (ENOL) from Mastigamoeba balamuthi (Phreatamoeba balamuthi).